We begin with the raw amino-acid sequence, 177 residues long: Large ribosomal subunit protein uL6 (177 aa).

A disordered region spans residues 154 to 177 (PEPYKGKGVRYADEQVRRKEAKKK). Over residues 155–171 (EPYKGKGVRYADEQVRR) the composition is skewed to basic and acidic residues.

This sequence belongs to the universal ribosomal protein uL6 family. As to quaternary structure, part of the 50S ribosomal subunit.

In terms of biological role, this protein binds to the 23S rRNA, and is important in its secondary structure. It is located near the subunit interface in the base of the L7/L12 stalk, and near the tRNA binding site of the peptidyltransferase center. The polypeptide is Large ribosomal subunit protein uL6 (Alcanivorax borkumensis (strain ATCC 700651 / DSM 11573 / NCIMB 13689 / SK2)).